Here is a 533-residue protein sequence, read N- to C-terminus: Large neutral amino acids transporter small subunit 2 (533 aa).

A disordered region spans residues 1 to 33 (MEKGTRQRNNTAKNHPDRGSDTSPEAEASSGGG). Over 1 to 45 (MEKGTRQRNNTAKNHPDRGSDTSPEAEASSGGGGVALKKEIGLVS) the chain is Cytoplasmic. A phosphoserine mark is found at serine 20, serine 23, serine 29, and serine 30. The chain crosses the membrane as a helical span at residues 46–66 (ACGIIVGNIIGSGIFVSPKGV). Isoleucine 54 contacts L-leucine. Topologically, residues 67-74 (LENAGSVG) are extracellular. A helical transmembrane segment spans residues 75 to 96 (LALIVWIVTGVITAVGALCYAE). The Cytoplasmic portion of the chain corresponds to 97–117 (LGVTIPKSGGDYSYVKDIFGG). Residues 118-150 (LAGFLRLWIAVLVIYPTNQAVIALTFSNYVLQP) form a helical membrane-spanning segment. Asparagine 135 serves as a coordination point for L-tryptophan. Residues 151-158 (LFPTCFPP) lie on the Extracellular side of the membrane. Residues 159–179 (ESGLRLLAAICLLLLTWVNCS) traverse the membrane as a helical segment. Residues 180–182 (SVR) lie on the Cytoplasmic side of the membrane. Residues 183 to 211 (WATRVQDIFTAGKLLALALIIIMGVVQIC) traverse the membrane as a helical segment. At 212–231 (KGEFFWLEPKNAFENFQEPD) the chain is on the extracellular side. The chain crosses the membrane as a helical span at residues 232–253 (IGLVALAFLQGSFAYGGWNFLN). Glycine 247 provides a ligand contact to L-leucine. Residues 254–266 (YVTEELVDPYKNL) are Cytoplasmic-facing. Residues 267–288 (PRAIFISIPLVTFVYVFANIAY) form a helical membrane-spanning segment. The Extracellular segment spans residues 289 to 313 (VTAMSPQELLASNAVAVTFGEKLLG). Residues 314-339 (VMAWIMPISVALSTFGGVNGSLFTSS) form a helical membrane-spanning segment. The Cytoplasmic segment spans residues 340–365 (RLFFAGAREGHLPSVLAMIHVKRCTP). The helical transmembrane segment at 366–383 (IPALLFTCLSTLLMLVTS) threads the bilayer. The Extracellular segment spans residues 384-387 (DMYT). The chain crosses the membrane as a helical span at residues 388–409 (LINYVGFINYLFYGVTVAGQIV). Asparagine 396 lines the L-tryptophan pocket. The Cytoplasmic segment spans residues 410–424 (LRWKKPDIPRPIKIS). 2 helical membrane passes run 425-447 (LLFPIIYLLFWAFLLIFSLWSEP) and 448-467 (VVCGIGLAIMLTGVPVYFLG). Residues 468–533 (VYWQHKPKCF…VKDPDSEEQP (66 aa)) lie on the Cytoplasmic side of the membrane. Residues 500–533 (GDSGTEETIDDVEEQHKPIFQPTPVKDPDSEEQP) are disordered. The span at 502–512 (SGTEETIDDVE) shows a compositional bias: acidic residues. Phosphoserine is present on serine 529.

It belongs to the amino acid-polyamine-organocation (APC) superfamily. L-type amino acid transporter (LAT) (TC 2.A.3.8) family. As to quaternary structure, disulfide-linked heterodimer composed of the catalytic light chain subunit SLC7A8 and the heavy chain subunit SLC3A2. SLC3A2 acts as a chaperone for correct plasma membrane trafficking and stabilization of SLC7A8 and modulates the substrate affinity and specificity of SLC7A8. ICAM-1 associates with the heterodimer SLC3A2/SLC7A8; facilitates leucine uptake. In terms of tissue distribution, expression is seen in jejunum mucosa and the epithelial cells of the jejunum, ileum and colon, as well as in kidney, placenta, brain, testis and skeletal muscle. Expressed in retina, inner blood-retinal barrier of retina, retinal vascular endothelial cells. Also expressed in the intestinal epithelial cell line IEC-6 and in the retinal capillary endothelial cell line TR-iBRB2.

Its subcellular location is the cell membrane. The protein localises to the basolateral cell membrane. It catalyses the reaction L-dopa(out) + L-phenylalanine(in) = L-dopa(in) + L-phenylalanine(out). The catalysed reaction is 3,3'-diiodo-L-thyronine(out) = 3,3'-diiodo-L-thyronine(in). The enzyme catalyses L-histidine(in) + L-phenylalanine(out) = L-histidine(out) + L-phenylalanine(in). It carries out the reaction L-tryptophan(in) + L-phenylalanine(out) = L-tryptophan(out) + L-phenylalanine(in). It catalyses the reaction L-isoleucine(in) + L-phenylalanine(out) = L-isoleucine(out) + L-phenylalanine(in). The catalysed reaction is L-valine(in) + L-phenylalanine(out) = L-valine(out) + L-phenylalanine(in). The enzyme catalyses L-leucine(in) + L-phenylalanine(out) = L-leucine(out) + L-phenylalanine(in). It carries out the reaction L-glutamine(in) + L-phenylalanine(out) = L-glutamine(out) + L-phenylalanine(in). It catalyses the reaction L-cysteine(in) + L-phenylalanine(out) = L-cysteine(out) + L-phenylalanine(in). The catalysed reaction is L-phenylalanine(out) + L-methionine(in) = L-phenylalanine(in) + L-methionine(out). The enzyme catalyses L-leucine(out) + L-methionine(in) = L-leucine(in) + L-methionine(out). It carries out the reaction L-cysteine(out) + L-methionine(in) = L-cysteine(in) + L-methionine(out). It catalyses the reaction S-methylmercury-L-cysteine(out) + L-methionine(in) = S-methylmercury-L-cysteine(in) + L-methionine(out). The catalysed reaction is S-methylmercury-L-cysteine(in) + L-leucine(out) = S-methylmercury-L-cysteine(out) + L-leucine(in). The enzyme catalyses S-methylmercury-L-cysteine(in) + L-phenylalanine(out) = S-methylmercury-L-cysteine(out) + L-phenylalanine(in). It carries out the reaction L-phenylalanine(out) + L-serine(in) = L-phenylalanine(in) + L-serine(out). It catalyses the reaction L-phenylalanine(out) + glycine(in) = L-phenylalanine(in) + glycine(out). The catalysed reaction is L-phenylalanine(out) + L-alanine(in) = L-phenylalanine(in) + L-alanine(out). The enzyme catalyses 3,3',5-triiodo-L-thyronine(out) = 3,3',5-triiodo-L-thyronine(in). With respect to regulation, leucine transport activity is inhibited by 2-amino-bicyclo-(2,2,1)-heptane-2-carboxylate (BCH), glycine, L-isomers of the neutral amino acids and histidine. In terms of biological role, associates with SLC3A2 to form a functional heterodimeric complex that translocates small and large neutral amino acids with broad specificity and a stoichiometry of 1:1. Functions as amino acid antiporter mediating the influx of extracellular essential amino acids mainly in exchange with the efflux of highly concentrated intracellular amino acids. Has relatively symmetrical selectivities but strongly asymmetrical substrate affinities at both the intracellular and extracellular sides of the transporter. This asymmetry allows SLC7A8 to regulate intracellular amino acid pools (mM concentrations) by exchange with external amino acids (uM concentration range), equilibrating the relative concentrations of different amino acids across the plasma membrane instead of mediating their net uptake. May play an essential role in the reabsorption of neutral amino acids from the epithelial cells to the bloodstream in the kidney. Involved in the uptake of methylmercury (MeHg) when administered as the L-cysteine or D,L-homocysteine complexes, and hence plays a role in metal ion homeostasis and toxicity. Involved in the cellular activity of small molecular weight nitrosothiols, via the stereoselective transport of L-nitrosocysteine (L-CNSO) across the transmembrane. Imports the thyroid hormone diiodothyronine (T2) and to a smaller extent triiodothyronine (T3) but not rT 3 or thyroxine (T4). Mediates the uptake of L-DOPA. May participate in auditory function. This is Large neutral amino acids transporter small subunit 2 (Slc7a8) from Rattus norvegicus (Rat).